The chain runs to 407 residues: Methyltransferase/ribosomally synthesized type I borosin cyclic peptide precursor ceuMA2 (407 aa).

The tract at residues 1–246 is methyltransferase domain; sequence MATTKTGSLT…TTSTLYIPPR (246 aa). Catalysis depends on residues Arg-70, Tyr-74, and Tyr-96. S-adenosyl-L-methionine contacts are provided by Tyr-96, His-98, Val-101, Ala-128, Gln-170, Gly-208, Ser-239, and Thr-240. The interval 247–370 is clasp domain; that stretch reads EIAPVDQRIM…GPVYKVMRAT (124 aa). The tract at residues 371-393 is precursor leader; sequence PAAIAAGQEHSLDEIAGSADSES. Residues Thr-399 and Thr-400 each carry the N-methylthreonine modification. Ile-401 is subject to N-methylisoleucine. Val-402 and Val-403 each carry N-methylvaline. An N-methylisoleucine modification is found at Ile-404. N-methylvaline is present on Val-405. His-406 is modified (N-methylhistidine).

This sequence in the N-terminal section; belongs to the precorrin methyltransferase family. Homodimer. Post-translationally, ceuMA2 automethylates at Thr-399, Thr-400, Ile-401, Val-402, Val-403, Ile-404, Val-405 and His-406 before being processed by a prolyloligopeptidase which likely forms a peptidyl ester upon removal of the follower propeptide, which then undergoes macrocyclization with the N-terminus of the modified core peptide. Peptide backbone alpha-N-methylations change the physicochemical properties of amide bonds to provide structural constraints and other favorable characteristics including biological membrane permeability to peptides.

Its pathway is secondary metabolite biosynthesis. Fusion protein of the methyltransferase ceuM2 and a type I borosin core peptide; part of the gene cluster that mediates the biosynthesis of a type I borosin, a highly methylated cyclic peptide with potent biological activities. Type I borosins derive from the C-terminus of the fusion protein, and it is the same protein that methylates its own C-terminus using S-adenosyl methionine (SAM). The C-terminus is subsequently cleaved off and macrocyclized by a prolyloligopeptidase to give the final product. In Cerrena unicolor (Canker rot fungus), this protein is Methyltransferase/ribosomally synthesized type I borosin cyclic peptide precursor ceuMA2.